A 486-amino-acid polypeptide reads, in one-letter code: Cardiolipin synthase A (486 aa).

2 helical membrane-spanning segments follow: residues 3 to 23 (TFYTVVSWLVILGYWILIAGV) and 38 to 58 (MAWLLIIYILPLVGIIAYLSF). PLD phosphodiesterase domains are found at residues 219–246 (MDLRQHRKMVMIDNYIAYTGSMNMVDPR) and 399–426 (EGGLLHTKSVLVDGELSLVGTVNLDMRS). Residues histidine 224, lysine 226, aspartate 231, histidine 404, lysine 406, and aspartate 411 contribute to the active site.

It belongs to the phospholipase D family. Cardiolipin synthase subfamily. ClsA sub-subfamily.

It is found in the cell inner membrane. It carries out the reaction 2 a 1,2-diacyl-sn-glycero-3-phospho-(1'-sn-glycerol) = a cardiolipin + glycerol. Its function is as follows. Catalyzes the reversible phosphatidyl group transfer from one phosphatidylglycerol molecule to another to form cardiolipin (CL) (diphosphatidylglycerol) and glycerol. This chain is Cardiolipin synthase A, found in Citrobacter koseri (strain ATCC BAA-895 / CDC 4225-83 / SGSC4696).